A 477-amino-acid polypeptide reads, in one-letter code: Protein DETOXIFICATION 5 (477 aa).

A run of 12 helical transmembrane segments spans residues 38–58 (AAPM…SVMV), 72–92 (LATA…VGAL), 113–133 (FSAI…WFYM), 146–166 (ISKV…AQAV), 187–207 (AITT…AFGL), 211–231 (GAAL…ALYV), 263–283 (AAMT…SGLL), 292–312 (VLSI…GIGA), 333–353 (AVFA…TLLF), 376–396 (LSSL…LDGV), 411–431 (VVAY…WGHM), and 436–456 (LWIG…IVTA).

Belongs to the multi antimicrobial extrusion (MATE) (TC 2.A.66.1) family.

It localises to the membrane. The chain is Protein DETOXIFICATION 5 from Arabidopsis thaliana (Mouse-ear cress).